Here is a 781-residue protein sequence, read N- to C-terminus: Translation initiation factor IF-2 (781 aa).

The interval 44-195 is disordered; that stretch reads RQLDNAVDGT…TPPKPKELPE (152 aa). Over residues 53 to 65 the composition is skewed to basic and acidic residues; that stretch reads TNKKAEAPKKETT. The span at 66–81 shows a compositional bias: polar residues; the sequence is SNENGNSKGPNKPNMT. Low complexity predominate over residues 82 to 93; sequence NSNEKSNKPNKP. Over residues 115–126 the composition is skewed to polar residues; it reads KPANTGNQTQAS. The segment covering 127-169 has biased composition (low complexity); it reads GNQQAGGQKRNNNNNSNRPGGGNPNRPGGNNRPNRGGNFNNKG. The region spanning 282–451 is the tr-type G domain; it reads ERPPVVTIMG…LLVSEVEELK (170 aa). The segment at 291 to 298 is G1; the sequence is GHVDHGKT. 291 to 298 provides a ligand contact to GTP; it reads GHVDHGKT. Positions 316–320 are G2; the sequence is GITQH. Residues 337–340 form a G3 region; sequence DTPG. GTP-binding positions include 337 to 341 and 391 to 394; these read DTPGH and NKID. The segment at 391–394 is G4; the sequence is NKID. The segment at 427–429 is G5; the sequence is SAK.

The protein belongs to the TRAFAC class translation factor GTPase superfamily. Classic translation factor GTPase family. IF-2 subfamily.

It localises to the cytoplasm. One of the essential components for the initiation of protein synthesis. Protects formylmethionyl-tRNA from spontaneous hydrolysis and promotes its binding to the 30S ribosomal subunits. Also involved in the hydrolysis of GTP during the formation of the 70S ribosomal complex. This Listeria monocytogenes serotype 4a (strain HCC23) protein is Translation initiation factor IF-2.